We begin with the raw amino-acid sequence, 102 residues long: Small ribosomal subunit protein uS10 (102 aa).

The protein belongs to the universal ribosomal protein uS10 family. In terms of assembly, part of the 30S ribosomal subunit.

In terms of biological role, involved in the binding of tRNA to the ribosomes. This chain is Small ribosomal subunit protein uS10, found in Bifidobacterium longum subsp. infantis (strain ATCC 15697 / DSM 20088 / JCM 1222 / NCTC 11817 / S12).